Reading from the N-terminus, the 1824-residue chain is Treslin (1824 aa).

Disordered stretches follow at residues 542 to 572 (EFYQ…QKMK), 590 to 622 (AQKT…KPGL), 907 to 973 (SPSK…SGES), 1001 to 1035 (RHSS…KGKF), 1098 to 1117 (AVGC…VGDN), 1189 to 1221 (VPEN…SPEE), 1293 to 1388 (PFCN…DDDK), 1459 to 1518 (FEGK…QSSP), 1617 to 1650 (TPTH…NLNS), and 1803 to 1824 (PLCQ…KLLD). Residues 546–555 (SSTAGSSGSL) are compositionally biased toward low complexity. A compositionally biased stretch (polar residues) spans 562–572 (TQCTPVRQKMK). The segment covering 605–619 (GTEKGGKKSSGDRTK) has biased composition (basic and acidic residues). Positions 907-921 (SPSKKSKMPRSQSVS) are enriched in polar residues. The span at 932–952 (SDVDNDDRHTLLTKKVSETPL) shows a compositional bias: basic and acidic residues. 2 stretches are compositionally biased toward polar residues: residues 1005 to 1014 (VFYSSSQPRS) and 1103 to 1114 (TPQSPRTPNRTV). Residues 1319–1345 (RSGNTPVKESCSPSSNSQGITGTSPSP) are compositionally biased toward polar residues. Residues 1347 to 1370 (KSLSSAVAKSSPSPSFGPSRSGVG) show a composition bias toward low complexity. The span at 1462–1472 (KQTTSTGTPLT) shows a compositional bias: polar residues. A compositionally biased stretch (basic and acidic residues) spans 1480–1490 (TPDRRQREAEA). Polar residues-rich tracts occupy residues 1617–1629 (TPTH…QSPL) and 1636–1650 (SPQS…NLNS). Positions 1807 to 1824 (PRRRRTPSRTYSRKKLLD) are enriched in basic residues.

Belongs to the treslin family. As to quaternary structure, interacts with topbp1 (via BRCT domains); interaction takes place in a cdk2-dependent manner. Component of the replisome complex.

The protein resides in the nucleus. Regulator of DNA replication and S/M and G2/M checkpoints. Regulates the triggering of DNA replication initiation via its interaction with topbp1 by participating in cdk2-mediated loading of cdc45l onto replication origins. Required for the transition from pre-replication complex (pre-RC) to pre-initiation complex (pre-IC). Required to prevent mitotic entry after treatment with ionizing radiation. This Danio rerio (Zebrafish) protein is Treslin (ticrr).